Here is a 452-residue protein sequence, read N- to C-terminus: Adenylyltransferase and sulfurtransferase MOCS3 (452 aa).

Residues glycine 99, aspartate 120, 127–131 (SNLHR), lysine 144, and 188–189 (DN) contribute to the ATP site. Zn(2+) is bound by residues cysteine 230 and cysteine 233. Cysteine 247 functions as the Glycyl thioester intermediate; for adenylyltransferase activity in the catalytic mechanism. Cysteine 305 and cysteine 308 together coordinate Zn(2+). One can recognise a Rhodanese domain in the interval 354–450 (KTKAHLLLDV…WTNQVDQSFP (97 aa)). Catalysis depends on cysteine 409, which acts as the Cysteine persulfide intermediate; for sulfurtransferase activity.

In the N-terminal section; belongs to the HesA/MoeB/ThiF family. UBA4 subfamily. Requires Zn(2+) as cofactor.

It localises to the cytoplasm. The protein localises to the cytosol. It carries out the reaction [molybdopterin-synthase sulfur-carrier protein]-C-terminal Gly-Gly + ATP + H(+) = [molybdopterin-synthase sulfur-carrier protein]-C-terminal Gly-Gly-AMP + diphosphate. The enzyme catalyses [molybdopterin-synthase sulfur-carrier protein]-C-terminal Gly-Gly-AMP + S-sulfanyl-L-cysteinyl-[cysteine desulfurase] + AH2 = [molybdopterin-synthase sulfur-carrier protein]-C-terminal-Gly-aminoethanethioate + L-cysteinyl-[cysteine desulfurase] + A + AMP + 2 H(+). The protein operates within tRNA modification; 5-methoxycarbonylmethyl-2-thiouridine-tRNA biosynthesis. It participates in cofactor biosynthesis; molybdopterin biosynthesis. Functionally, plays a central role in 2-thiolation of mcm(5)S(2)U at tRNA wobble positions of cytosolic tRNA(Lys), tRNA(Glu) and tRNA(Gln). Also essential during biosynthesis of the molybdenum cofactor. Acts by mediating the C-terminal thiocarboxylation of sulfur carriers URM1 and MOCS2A. Its N-terminus first activates URM1 and MOCS2A as acyl-adenylates (-COAMP), then the persulfide sulfur on the catalytic cysteine is transferred to URM1 and MOCS2A to form thiocarboxylation (-COSH) of their C-terminus. The reaction probably involves hydrogen sulfide that is generated from the persulfide intermediate and that acts as a nucleophile towards URM1 and MOCS2A. Subsequently, a transient disulfide bond is formed. Does not use thiosulfate as sulfur donor; NFS1 probably acting as a sulfur donor for thiocarboxylation reactions. The polypeptide is Adenylyltransferase and sulfurtransferase MOCS3 (Drosophila virilis (Fruit fly)).